We begin with the raw amino-acid sequence, 65 residues long: Large ribosomal subunit protein bL33c (65 aa).

It belongs to the bacterial ribosomal protein bL33 family.

Its subcellular location is the plastid. It localises to the chloroplast. The protein is Large ribosomal subunit protein bL33c (rpl33) of Marchantia polymorpha (Common liverwort).